Here is a 643-residue protein sequence, read N- to C-terminus: U3 small nucleolar RNA-associated protein 5 (643 aa).

WD repeat units lie at residues 14–54, 55–98, 186–225, 227–266, 340–389, and 471–511; these read GQYL…LYLE, DSKL…VTYK, GHVS…TKCV, VAES…SSTK, SADR…LEQE, and RLKP…IHGG. The tract at residues 565–643 is disordered; that stretch reads HSSEPVVEED…EAGYSDVEME (79 aa). Residues 570–611 are compositionally biased toward acidic residues; it reads VVEEDEDDVEYNEELDDAGLIEDGEESYGSEEEEEGDSDNEE. A compositionally biased stretch (basic and acidic residues) spans 612 to 626; the sequence is EQKHTSSKQDGRLET. Positions 627 to 643 are enriched in acidic residues; it reads EQSDGEEEAGYSDVEME.

The protein belongs to the UTP5 family. In terms of assembly, interacts with snoRNA U3. Interacts with MPP10. Component of the ribosomal small subunit (SSU) processome composed of at least 40 protein subunits and snoRNA U3. In the absence of snoRNA3, forms a complex with other t-UTPs. This complex can associate with pre-18S ribosomal RNAs.

The protein resides in the nucleus. The protein localises to the nucleolus. Functionally, involved in nucleolar processing of pre-18S ribosomal RNA. Required for optimal pre-ribosomal RNA transcription by RNA polymerase I together with a subset of U3 proteins required for transcription (t-UTPs). This Saccharomyces cerevisiae (strain ATCC 204508 / S288c) (Baker's yeast) protein is U3 small nucleolar RNA-associated protein 5 (UTP5).